Consider the following 172-residue polypeptide: Type IV secretion system putative outer membrane lipoprotein BAB2_0057 (172 aa).

The first 15 residues, 1-15, serve as a signal peptide directing secretion; that stretch reads MRTLVMVACAVSLAA. Cys16 carries N-palmitoyl cysteine lipidation. The S-diacylglycerol cysteine moiety is linked to residue Cys16. The OmpA-like domain maps to 58–172; it reads WPARPPKQTV…RRVDIEILRK (115 aa).

The protein localises to the cell outer membrane. In terms of biological role, the virB operon is essential for intracellular survival and is not involved in the invasion process. Constitutes a major determinant of virulence in mice. This protein is essential for pathogenesis in mice but is not required for intracellular survival. In Brucella abortus (strain 2308), this protein is Type IV secretion system putative outer membrane lipoprotein BAB2_0057.